The following is a 156-amino-acid chain: MPRKREVPVRPVLPDARYNSKLVSMFIHKLMRDGKKSTAESILYKAFDIINEKTGKAPLEVFEEALANVKPKLEVKSRRVGGSTYQVPTEIREARRLALAIRWMIGYARSRAEKGMDVKLAGELMDAAGQRGASVKKREDTHKMAEANKAFAHYRW.

The protein belongs to the universal ribosomal protein uS7 family. Part of the 30S ribosomal subunit. Contacts proteins S9 and S11.

Its function is as follows. One of the primary rRNA binding proteins, it binds directly to 16S rRNA where it nucleates assembly of the head domain of the 30S subunit. Is located at the subunit interface close to the decoding center, probably blocks exit of the E-site tRNA. The protein is Small ribosomal subunit protein uS7 of Desulfosudis oleivorans (strain DSM 6200 / JCM 39069 / Hxd3) (Desulfococcus oleovorans).